The chain runs to 810 residues: Protein kinase C-binding protein NELL1 (810 aa).

A signal peptide spans 1-21 (MPMDLILVVWFCVCTARTVVG). N40, N53, N83, N224, N294, and N372 each carry an N-linked (GlcNAc...) asparagine glycan. The 164-residue stretch at 64–227 (EREIHAAPHV…TQCPNLNHTC (164 aa)) folds into the Laminin G-like domain. One can recognise a VWFC 1 domain in the interval 271–332 (KTCQVSGLLY…IAGQCCKVCR (62 aa)). Intrachain disulfides connect C395-C407, C401-C416, and C418-C432. Ca(2+)-binding residues include D434, I435, and E437. Residues 434 to 475 (DIDECAAKMHYCHANTVCVNLPGLYRCDCVPGYIRVDDFSCT) enclose the EGF-like 1; calcium-binding domain. 15 disulfides stabilise this stretch: C438/C451, C445/C460, C462/C474, C480/C493, C487/C502, C504/C515, C519/C529, C523/C535, C537/C546, C553/C566, C560/C575, C577/C594, C600/C613, C607/C622, and C624/C630. Positions 453, 454, and 457 each coordinate Ca(2+). In terms of domain architecture, EGF-like 2; calcium-binding spans 476–516 (EHDECGSGQHNCDENAICTNTVQGHSCTCKPGYVGNGTICR). N511 is a glycosylation site (N-linked (GlcNAc...) asparagine). Residues 517 to 547 (AFCEEGCRYGGTCVAPNKCVCPSGFTGSHCE) enclose the EGF-like 3 domain. One can recognise an EGF-like 4; calcium-binding domain in the interval 549–587 (DIDECSEGIIECHNHSRCVNLPGWYHCECRSGFHDDGTY). N562 carries an N-linked (GlcNAc...) asparagine glycan. Residues 596–631 (DIDECALRTHTCWNDSACINLAGGFDCLCPSGPSCS) enclose the EGF-like 5; calcium-binding domain. Residue N609 is glycosylated (N-linked (GlcNAc...) asparagine). Residues 692 to 750 (SQCLDQNGHKLYRSGDNWTHSCQQCRCLEGEVDCWPLTCPNLSCEYTAILEGECCPRCV) form the VWFC 2 domain. N-linked (GlcNAc...) asparagine glycans are attached at residues N708, N732, and N758.

Homotrimer. Binds to PKC beta-1. Interacts with ATRAID; the interaction promotes osteoblast cell differentiation and mineralization. Interacts with ROBO3.

Its subcellular location is the cytoplasm. The protein localises to the nucleus envelope. It localises to the secreted. Its function is as follows. Plays a role in the control of cell growth and differentiation. Promotes osteoblast cell differentiation and terminal mineralization. The protein is Protein kinase C-binding protein NELL1 (NELL1) of Homo sapiens (Human).